Reading from the N-terminus, the 237-residue chain is tRNA(His) guanylyltransferase (237 aa).

3 residues coordinate Mg(2+): Asp29, Gly30, and Asp77. Residues 29–34 and 76–77 each bind GTP; these read DGKKFH and SD.

It belongs to the tRNA(His) guanylyltransferase family. It depends on Mg(2+) as a cofactor.

It carries out the reaction a 5'-end ribonucleotide-tRNA(His) + GTP + ATP + H2O = a 5'-end phospho-guanosine-ribonucleotide-tRNA(His) + AMP + 2 diphosphate + H(+). In terms of biological role, adds a GMP to the 5'-end of tRNA(His) after transcription and RNase P cleavage. In Candida glabrata (strain ATCC 2001 / BCRC 20586 / JCM 3761 / NBRC 0622 / NRRL Y-65 / CBS 138) (Yeast), this protein is tRNA(His) guanylyltransferase (THG1).